The following is a 1012-amino-acid chain: Vacuolar membrane protease (1012 aa).

Over 1–60 (MRRSTDPRNLLVRRGPLLVDGESAISELDPGFFPTGDAPKMSSTTRRRFNLIAFTPGPVT) the chain is Cytoplasmic. Residues 61-81 (VISSLVYLALLIPLLLVHTIV) traverse the membrane as a helical segment. Over 82–432 (PSAPKSNPKG…SFAVFRLHTL (351 aa)) the chain is Vacuolar. The N-linked (GlcNAc...) asparagine glycan is linked to N159. H215 and D227 together coordinate Zn(2+). Residue E261 is the Proton acceptor of the active site. Residues E262, E287, and H360 each coordinate Zn(2+). Residues 433–453 (FAISVTLLVVCPIVLFVIGII) form a helical membrane-spanning segment. The Cytoplasmic segment spans residues 454 to 487 (LSKMDKMYLFSIHETIPETKEKVSVRGLRGLFRY). Residues 488 to 508 (PIILVVSSGILIGLSYLLAKV) traverse the membrane as a helical segment. The Vacuolar portion of the chain corresponds to 509 to 518 (NPFIVHSSSY). Residues 519-539 (AVWSMMLSSWIFMTWFLSCIA) traverse the membrane as a helical segment. Topologically, residues 540 to 550 (DFFRPSALHRA) are cytoplasmic. Residues 551-571 (YTFTWQLLVMWVLLVISTVYV) form a helical membrane-spanning segment. At 572-575 (NQHD) the chain is on the vacuolar side. The helical transmembrane segment at 576 to 596 (IAAGYFIVFYFAGTFLATLIS) threads the bilayer. The Cytoplasmic portion of the chain corresponds to 597 to 710 (YLELFALPNK…WSASLPTWTW (114 aa)). Over residues 614–629 (SQYPSRLGSNRSSRIL) the composition is skewed to polar residues. Residues 614-660 (SQYPSRLGSNRSSRILSPSADELPTGGDNNGEIYDGEEEPTESSSLL) are disordered. A helical membrane pass occupies residues 711–731 (VLQFLFVGPVVIMFIGQLGLF). At 732 to 743 (LTSAMNQVGADG) the chain is on the vacuolar side. The chain crosses the membrane as a helical span at residues 744–764 (VGLLVVYIAIAVFSVLLLIPL). At 765–777 (SPFIHRFTYHVPT) the chain is on the cytoplasmic side. The helical transmembrane segment at 778–798 (FLLLVFIATLIYNLAAFPFSA) threads the bilayer. Residues 799 to 1012 (ENRLKIFFVQ…DGLVEVSRGF (214 aa)) lie on the Vacuolar side of the membrane. N-linked (GlcNAc...) asparagine glycans are attached at residues N842 and N878.

This sequence belongs to the peptidase M28 family. It depends on Zn(2+) as a cofactor.

The protein localises to the vacuole membrane. May be involved in vacuolar sorting and osmoregulation. The polypeptide is Vacuolar membrane protease (Coccidioides posadasii (strain RMSCC 757 / Silveira) (Valley fever fungus)).